The primary structure comprises 137 residues: Transcription antitermination protein NusB (137 aa).

The protein belongs to the NusB family.

Involved in transcription antitermination. Required for transcription of ribosomal RNA (rRNA) genes. Binds specifically to the boxA antiterminator sequence of the ribosomal RNA (rrn) operons. The chain is Transcription antitermination protein NusB from Borreliella afzelii (strain PKo) (Borrelia afzelii).